The sequence spans 210 residues: Oxygen-insensitive NADPH nitroreductase (210 aa).

Residue G150–G155 coordinates NADP(+).

It belongs to the nitroreductase family.

Functionally, reduction of a variety of nitroaromatic compounds using NADPH as source of reducing equivalents; two electrons are transferred. This Helicobacter acinonychis (strain Sheeba) protein is Oxygen-insensitive NADPH nitroreductase (rdxA).